Consider the following 684-residue polypeptide: Transcriptional regulatory protein RCO1 (684 aa).

Met1 is subject to N-acetylmethionine. Residues 1 to 48 (MDTSKKDTTRSPSHSNSSSPSSSSLSSSSSKEKKRPKRLSSQNVNYDL) are disordered. A compositionally biased stretch (low complexity) spans 10-29 (RSPSHSNSSSPSSSSLSSSS). The residue at position 68 (Ser68) is a Phosphoserine. Residues 260–309 (EDFCSACNQSGSFLCCDTCPKSFHFLCLDPPIDPNNLPKGDWHCNECKFK) form a PHD-type 1 zinc finger. The PHD-type 2; atypical zinc finger occupies 414–472 (FLICYKCNQTRLGSWSHPENSRLIMTCDYCQTPWHLDCVPRASFKNLGSKWKCPLHSPT). Residue Ser683 is modified to Phosphoserine.

Component of the RPD3C(S) complex composed of at least EAF3, RCO1, RPD3, SIN3, and UME1.

Its subcellular location is the nucleus. Functionally, catalytic component of the RPD3C(S) histone deacetylase complex responsible for the deacetylation of lysine residues on the N-terminal part of the core histones (H2A, H2B, H3 and H4). Histone deacetylation gives a tag for epigenetic repression and plays an important role in transcriptional regulation, cell cycle progression, DNA damage response, osmotic stress response and developmental events. The polypeptide is Transcriptional regulatory protein RCO1 (RCO1) (Saccharomyces cerevisiae (strain ATCC 204508 / S288c) (Baker's yeast)).